Consider the following 91-residue polypeptide: Protein LURE 1.6 (91 aa).

The N-terminal stretch at 1-20 (MKLPFIFLITLLIFVSSCTS) is a signal peptide. Disulfide bonds link Cys-59-Cys-76, Cys-62-Cys-83, and Cys-66-Cys-85.

The protein belongs to the DEFL family. Expressed in the pistil. Detected in the synergid cells.

Its subcellular location is the secreted. Pollen tube attractants guiding pollen tubes to the ovular micropyle. In Arabidopsis thaliana (Mouse-ear cress), this protein is Protein LURE 1.6.